Here is a 318-residue protein sequence, read N- to C-terminus: Forkhead box protein I2 (318 aa).

Residues 1-30 (MATYCDDLGPSSAPPGQAQATAHPPGYEPG) form a disordered region. Residues 102-196 (RPPYSYSALI…DNGNFRRKRK (95 aa)) constitute a DNA-binding region (fork-head).

It is found in the nucleus. Its function is as follows. Possible transcriptional activator. In Homo sapiens (Human), this protein is Forkhead box protein I2 (FOXI2).